A 54-amino-acid polypeptide reads, in one-letter code: Small, acid-soluble spore protein gamma-type (54 aa).

The segment at 1–54 (MAKKNRNKQQQEMQQQQQQHQAEFANEFAEGSSAEQARQQQQKAAGKRQKKNQQ) is disordered. 2 stretches are compositionally biased toward low complexity: residues 10-21 (QQEMQQQQQQHQ) and 29-44 (AEGSSAEQARQQQQKA). The span at 45 to 54 (AGKRQKKNQQ) shows a compositional bias: basic residues.

The protein belongs to the gamma-type SASP family.

Functionally, SASP are proteins degraded in the first minutes of spore germination and provide amino acids for both new protein synthesis and metabolism. These proteins may be involved in dormant spore's high resistance to UV light. This is Small, acid-soluble spore protein gamma-type (sspA) from Alkalihalophilus pseudofirmus (strain ATCC BAA-2126 / JCM 17055 / OF4) (Bacillus pseudofirmus).